The sequence spans 275 residues: 3-methyl-2-oxobutanoate hydroxymethyltransferase (275 aa).

Asp-51 and Asp-90 together coordinate Mg(2+). 3-methyl-2-oxobutanoate-binding positions include 51-52 (DS), Asp-90, and Lys-120. Position 122 (Glu-122) interacts with Mg(2+). The active-site Proton acceptor is the Glu-189.

It belongs to the PanB family. Homodecamer; pentamer of dimers. The cofactor is Mg(2+).

It localises to the cytoplasm. It carries out the reaction 3-methyl-2-oxobutanoate + (6R)-5,10-methylene-5,6,7,8-tetrahydrofolate + H2O = 2-dehydropantoate + (6S)-5,6,7,8-tetrahydrofolate. The protein operates within cofactor biosynthesis; (R)-pantothenate biosynthesis; (R)-pantoate from 3-methyl-2-oxobutanoate: step 1/2. Its function is as follows. Catalyzes the reversible reaction in which hydroxymethyl group from 5,10-methylenetetrahydrofolate is transferred onto alpha-ketoisovalerate to form ketopantoate. This chain is 3-methyl-2-oxobutanoate hydroxymethyltransferase, found in Phenylobacterium zucineum (strain HLK1).